Consider the following 351-residue polypeptide: MIFLKILLLPFSLLYGGITAIRNYAYDKGWYKSYTLPVAVVCVGNIKAGGTGKTPFTQLLLQQFAGKYKTAVLSRGYGRKTKGFVLATAASTSAEIGDEPLQLYTHAQGVYAVAVCEDRVAGVEKLLQLIPDLKLVILDDGFQHRRINRDVNILLTEYQAPFYADWVLPAGRLREFRNGATRADAVVVTKTPAHAALLKTDNILRHTAKAIPVLYTTIEYGATRNEDGNYTWQPNEKAVLVTGIANPQPLVQYLNSRHIDIIKQFEFKDHYSYTLRDIQQMLDYQNANDGVKIVMTEKDWVKVVPLLRELNLSKGWYYVPIQIGIYSDQQQLLNTVETKIIDRLNRLTQHT.

Position 47-54 (47-54 (KAGGTGKT)) interacts with ATP.

The protein belongs to the LpxK family.

The catalysed reaction is a lipid A disaccharide + ATP = a lipid IVA + ADP + H(+). It functions in the pathway glycolipid biosynthesis; lipid IV(A) biosynthesis; lipid IV(A) from (3R)-3-hydroxytetradecanoyl-[acyl-carrier-protein] and UDP-N-acetyl-alpha-D-glucosamine: step 6/6. In terms of biological role, transfers the gamma-phosphate of ATP to the 4'-position of a tetraacyldisaccharide 1-phosphate intermediate (termed DS-1-P) to form tetraacyldisaccharide 1,4'-bis-phosphate (lipid IVA). This is Tetraacyldisaccharide 4'-kinase from Cytophaga hutchinsonii (strain ATCC 33406 / DSM 1761 / CIP 103989 / NBRC 15051 / NCIMB 9469 / D465).